A 338-amino-acid chain; its full sequence is Anthranilate phosphoribosyltransferase (338 aa).

5-phospho-alpha-D-ribose 1-diphosphate contacts are provided by residues Gly81, 84–85 (GD), Thr89, 91–94 (NIST), 109–117 (KHGNRSMVS), and Ser121. Gly81 lines the anthranilate pocket. Ser93 provides a ligand contact to Mg(2+). An anthranilate-binding site is contributed by Asn112. An anthranilate-binding site is contributed by Arg167. Positions 226 and 227 each coordinate Mg(2+).

The protein belongs to the anthranilate phosphoribosyltransferase family. Homodimer. Mg(2+) serves as cofactor.

The enzyme catalyses N-(5-phospho-beta-D-ribosyl)anthranilate + diphosphate = 5-phospho-alpha-D-ribose 1-diphosphate + anthranilate. The protein operates within amino-acid biosynthesis; L-tryptophan biosynthesis; L-tryptophan from chorismate: step 2/5. Its function is as follows. Catalyzes the transfer of the phosphoribosyl group of 5-phosphorylribose-1-pyrophosphate (PRPP) to anthranilate to yield N-(5'-phosphoribosyl)-anthranilate (PRA). In Acidithiobacillus ferrooxidans (strain ATCC 23270 / DSM 14882 / CIP 104768 / NCIMB 8455) (Ferrobacillus ferrooxidans (strain ATCC 23270)), this protein is Anthranilate phosphoribosyltransferase.